A 469-amino-acid chain; its full sequence is 3-isopropylmalate dehydratase large subunit (469 aa).

Residues Cys350, Cys410, and Cys413 each contribute to the [4Fe-4S] cluster site.

This sequence belongs to the aconitase/IPM isomerase family. LeuC type 1 subfamily. As to quaternary structure, heterodimer of LeuC and LeuD. [4Fe-4S] cluster is required as a cofactor.

The enzyme catalyses (2R,3S)-3-isopropylmalate = (2S)-2-isopropylmalate. It participates in amino-acid biosynthesis; L-leucine biosynthesis; L-leucine from 3-methyl-2-oxobutanoate: step 2/4. Functionally, catalyzes the isomerization between 2-isopropylmalate and 3-isopropylmalate, via the formation of 2-isopropylmaleate. This chain is 3-isopropylmalate dehydratase large subunit, found in Agrobacterium fabrum (strain C58 / ATCC 33970) (Agrobacterium tumefaciens (strain C58)).